A 287-amino-acid polypeptide reads, in one-letter code: Zinc finger protein SNAI3 (287 aa).

Residues 1-20 (MPRSFLVKTHSSHRVPNYGK) form an SNAG domain region. 4 C2H2-type zinc fingers span residues 147-169 (FECI…QQLH), 178-200 (FTCR…IRTH), 204-226 (CICK…IRTH), and 232-254 (YTCS…LQTH). The C2H2-type 5; degenerate zinc-finger motif lies at 260-282 (YRCAVCPKAFSRMSLLARHEEAG).

It belongs to the snail C2H2-type zinc-finger protein family. In terms of tissue distribution, highly expressed in skeletal muscle and thymus. Lower expression in heart, lung and spleen.

The protein localises to the nucleus. In terms of biological role, seems to inhibit myoblast differentiation. Transcriptional repressor of E-box-dependent transactivation of downstream myogenic bHLHs genes. Binds preferentially to the canonical E-box sequences 5'-CAGGTG-3' and 5'-CACCTG-3'. The sequence is that of Zinc finger protein SNAI3 (Snai3) from Mus musculus (Mouse).